A 117-amino-acid chain; its full sequence is Hemerythrin subunit alpha (117 aa).

7 residues coordinate Fe cation: His24, His53, Glu57, His72, His76, His105, and Asp110.

The protein belongs to the hemerythrin family. Octamer composed of two types of chains: alpha and beta.

In terms of biological role, hemerythrin is a respiratory protein in blood cells of certain marine worms. The oxygen-binding site in each chain contains two iron atoms. The chain is Hemerythrin subunit alpha from Lingula reevii (Inarticulated brachiopod).